We begin with the raw amino-acid sequence, 523 residues long: GMP synthase [glutamine-hydrolyzing] (523 aa).

Residues 8–205 (KILILDFGSQ…VVNICGCETK (198 aa)) form the Glutamine amidotransferase type-1 domain. Residue Cys85 is the Nucleophile of the active site. Active-site residues include His179 and Glu181. Positions 206 to 398 (WTAENIIEDA…LGLPAEMINR (193 aa)) constitute a GMPS ATP-PPase domain. ATP is bound at residue 233–239 (SGGVDSS).

As to quaternary structure, homodimer.

The catalysed reaction is XMP + L-glutamine + ATP + H2O = GMP + L-glutamate + AMP + diphosphate + 2 H(+). It participates in purine metabolism; GMP biosynthesis; GMP from XMP (L-Gln route): step 1/1. Catalyzes the synthesis of GMP from XMP. This chain is GMP synthase [glutamine-hydrolyzing] (guaA), found in Haemophilus influenzae (strain ATCC 51907 / DSM 11121 / KW20 / Rd).